A 242-amino-acid chain; its full sequence is UPF0246 protein SPCG_1533 (242 aa).

Belongs to the UPF0246 family.

This Streptococcus pneumoniae (strain CGSP14) protein is UPF0246 protein SPCG_1533.